Reading from the N-terminus, the 549-residue chain is Glucose-6-phosphate isomerase (549 aa).

Glutamate 355 (proton donor) is an active-site residue. Catalysis depends on residues histidine 387 and lysine 515.

The protein belongs to the GPI family.

The protein localises to the cytoplasm. It carries out the reaction alpha-D-glucose 6-phosphate = beta-D-fructose 6-phosphate. The protein operates within carbohydrate biosynthesis; gluconeogenesis. It functions in the pathway carbohydrate degradation; glycolysis; D-glyceraldehyde 3-phosphate and glycerone phosphate from D-glucose: step 2/4. Catalyzes the reversible isomerization of glucose-6-phosphate to fructose-6-phosphate. This is Glucose-6-phosphate isomerase from Mannheimia succiniciproducens (strain KCTC 0769BP / MBEL55E).